A 245-amino-acid polypeptide reads, in one-letter code: tRNA (guanine-N(1)-)-methyltransferase (245 aa).

Gly-114 is a binding site for S-adenosyl-L-methionine.

The protein belongs to the RNA methyltransferase TrmD family. As to quaternary structure, homodimer.

It is found in the cytoplasm. It carries out the reaction guanosine(37) in tRNA + S-adenosyl-L-methionine = N(1)-methylguanosine(37) in tRNA + S-adenosyl-L-homocysteine + H(+). Functionally, specifically methylates guanosine-37 in various tRNAs. The protein is tRNA (guanine-N(1)-)-methyltransferase of Sphingopyxis alaskensis (strain DSM 13593 / LMG 18877 / RB2256) (Sphingomonas alaskensis).